Reading from the N-terminus, the 197-residue chain is MDHMKTLVLVVHPNIESSRINKKWKEAVLSEPDVTVHDLYEKYRDQPIDVEFEQQQLLAHDRIVFQFPLYWYSSPPLLKQWFDEVFTFGWAHGPGGNKLKGKEWVTAMSIGSPEHSYQAGGYNLFSISELTKPFQASAHLVGMTYLPSFAEYRANTISDQEIAESANRYVKHITNIELNPKVRLQRYLKQLESVDLT.

It belongs to the NAD(P)H dehydrogenase (quinone) family.

This is an uncharacterized protein from Bacillus subtilis (strain 168).